A 472-amino-acid polypeptide reads, in one-letter code: Methanethiol oxidase (472 aa).

It belongs to the selenium-binding protein family.

Its subcellular location is the nucleus. It localises to the cytoplasm. The protein resides in the cytosol. The protein localises to the membrane. The enzyme catalyses methanethiol + O2 + H2O = hydrogen sulfide + formaldehyde + H2O2 + H(+). It functions in the pathway organosulfur degradation. Functionally, catalyzes the oxidation of methanethiol, an organosulfur compound known to be produced in substantial amounts by gut bacteria. Selenium-binding protein which may be involved in the sensing of reactive xenobiotics in the cytoplasm. May be involved in intra-Golgi protein transport. In Xenopus laevis (African clawed frog), this protein is Methanethiol oxidase (selenbp1-a).